A 382-amino-acid chain; its full sequence is Dual-specificity RNA methyltransferase RlmN (382 aa).

Glu96 serves as the catalytic Proton acceptor. In terms of domain architecture, Radical SAM core spans 102-342; sequence QGKRGTLCVS…VRTTRGEDID (241 aa). An intrachain disulfide couples Cys109 to Cys345. [4Fe-4S] cluster contacts are provided by Cys116, Cys120, and Cys123. Residues 170–171, Ser202, 224–226, and Asn302 each bind S-adenosyl-L-methionine; these read GE and SLH. Cys345 acts as the S-methylcysteine intermediate in catalysis.

It belongs to the radical SAM superfamily. RlmN family. The cofactor is [4Fe-4S] cluster.

It is found in the cytoplasm. It carries out the reaction adenosine(2503) in 23S rRNA + 2 reduced [2Fe-2S]-[ferredoxin] + 2 S-adenosyl-L-methionine = 2-methyladenosine(2503) in 23S rRNA + 5'-deoxyadenosine + L-methionine + 2 oxidized [2Fe-2S]-[ferredoxin] + S-adenosyl-L-homocysteine. The catalysed reaction is adenosine(37) in tRNA + 2 reduced [2Fe-2S]-[ferredoxin] + 2 S-adenosyl-L-methionine = 2-methyladenosine(37) in tRNA + 5'-deoxyadenosine + L-methionine + 2 oxidized [2Fe-2S]-[ferredoxin] + S-adenosyl-L-homocysteine. Functionally, specifically methylates position 2 of adenine 2503 in 23S rRNA and position 2 of adenine 37 in tRNAs. m2A2503 modification seems to play a crucial role in the proofreading step occurring at the peptidyl transferase center and thus would serve to optimize ribosomal fidelity. The protein is Dual-specificity RNA methyltransferase RlmN of Pseudomonas syringae pv. tomato (strain ATCC BAA-871 / DC3000).